Consider the following 250-residue polypeptide: Superoxide dismutase 1 copper chaperone (250 aa).

Residues 4-67 enclose the HMA domain; sequence SFEIVFAVPM…AIQSTGKDAI (64 aa). Residues C15, C18, C229, and C231 each coordinate Cu cation.

The protein belongs to the CCS1 family. Requires Cu(2+) as cofactor.

The protein localises to the cytoplasm. In terms of biological role, copper chaperone for superoxide dismutase 1 (SOD1). Binds copper ions and delivers them specifically to SOD1. This Debaryomyces hansenii (strain ATCC 36239 / CBS 767 / BCRC 21394 / JCM 1990 / NBRC 0083 / IGC 2968) (Yeast) protein is Superoxide dismutase 1 copper chaperone (CCS1).